A 207-amino-acid chain; its full sequence is Small ribosomal subunit protein uS4 (207 aa).

A disordered region spans residues 31-56; that stretch reads KCKLDSKPGQHGRTSGARTSDYGNQL. Polar residues predominate over residues 42–53; the sequence is GRTSGARTSDYG. An S4 RNA-binding domain is found at 97-157; it reads ARLDNVVYRM…EKSKKQVRIV (61 aa).

This sequence belongs to the universal ribosomal protein uS4 family. Part of the 30S ribosomal subunit. Contacts protein S5. The interaction surface between S4 and S5 is involved in control of translational fidelity.

Functionally, one of the primary rRNA binding proteins, it binds directly to 16S rRNA where it nucleates assembly of the body of the 30S subunit. Its function is as follows. With S5 and S12 plays an important role in translational accuracy. This chain is Small ribosomal subunit protein uS4, found in Janthinobacterium sp. (strain Marseille) (Minibacterium massiliensis).